The following is a 1347-amino-acid chain: DExH-box ATP-dependent RNA helicase DExH11 (1347 aa).

The segment at 263–291 is disordered; that stretch reads ELEGDDHTAGSESPKAEAEPDAKASISNE. Positions 267 to 284 are enriched in basic and acidic residues; that stretch reads DDHTAGSESPKAEAEPDA. Residues 369–524 form the Helicase ATP-binding domain; sequence ICCLEKGESV…WIGRTKQKEI (156 aa). Position 382 to 389 (382 to 389) interacts with ATP; the sequence is AHTSAGKT. The DEVH box motif lies at 472 to 475; it reads DEVH. The disordered stretch occupies residues 566-625; the sequence is SQKKKNSNAVSVAPKQQMGSSAHQDGSKSQKHEAHSRGKQNKHSSVKDVGKSSYSGNSQN. Over residues 590–601 the composition is skewed to basic and acidic residues; that stretch reads DGSKSQKHEAHS. One can recognise a Helicase C-terminal domain in the interval 673 to 838; it reads DLTSSSEKSE…LTYIMILHLL (166 aa).

It belongs to the DExH box helicase family. SKI2 subfamily. As to quaternary structure, component of the cytoplasmic SKI complex, which consists of SKI2, SKI3 and VIP3/SKI8. As to expression, expressed in vascular tissues of leaves and roots of young plants.

The protein resides in the cytoplasm. The catalysed reaction is ATP + H2O = ADP + phosphate + H(+). In terms of biological role, component of the SKI complex which is thought to be involved in exosome-mediated RNA decay and associates with transcriptionally active genes in a manner dependent on PAF1 complex (PAF1C). Involved in the regulation of potassium deprivation stress response. The protein is DExH-box ATP-dependent RNA helicase DExH11 of Arabidopsis thaliana (Mouse-ear cress).